We begin with the raw amino-acid sequence, 257 residues long: Indole-3-glycerol phosphate synthase (257 aa).

Belongs to the TrpC family.

The enzyme catalyses 1-(2-carboxyphenylamino)-1-deoxy-D-ribulose 5-phosphate + H(+) = (1S,2R)-1-C-(indol-3-yl)glycerol 3-phosphate + CO2 + H2O. It functions in the pathway amino-acid biosynthesis; L-tryptophan biosynthesis; L-tryptophan from chorismate: step 4/5. This Aquifex aeolicus (strain VF5) protein is Indole-3-glycerol phosphate synthase (trpC).